Consider the following 320-residue polypeptide: HPr kinase/phosphorylase (320 aa).

Catalysis depends on residues His141 and Lys162. ATP is bound at residue 156–163; it reads GHSGLGKS. Ser163 serves as a coordination point for Mg(2+). Catalysis depends on Asp180, which acts as the Proton acceptor; for phosphorylation activity. Proton donor; for dephosphorylation activity. The tract at residues 204 to 213 is important for the catalytic mechanism of both phosphorylation and dephosphorylation; it reads LEVRGLGILN. A Mg(2+)-binding site is contributed by Glu205. The active site involves Arg248. Positions 269–274 are important for the catalytic mechanism of dephosphorylation; sequence PVAVGR.

The protein belongs to the HPrK/P family. As to quaternary structure, homohexamer. Requires Mg(2+) as cofactor.

It catalyses the reaction [HPr protein]-L-serine + ATP = [HPr protein]-O-phospho-L-serine + ADP + H(+). The catalysed reaction is [HPr protein]-O-phospho-L-serine + phosphate + H(+) = [HPr protein]-L-serine + diphosphate. Functionally, catalyzes the ATP- as well as the pyrophosphate-dependent phosphorylation of a specific serine residue in HPr, a phosphocarrier protein of the phosphoenolpyruvate-dependent sugar phosphotransferase system (PTS). HprK/P also catalyzes the pyrophosphate-producing, inorganic phosphate-dependent dephosphorylation (phosphorolysis) of seryl-phosphorylated HPr (P-Ser-HPr). In Neisseria meningitidis serogroup A / serotype 4A (strain DSM 15465 / Z2491), this protein is HPr kinase/phosphorylase.